Consider the following 252-residue polypeptide: Probable aquaporin TIP1-2 (252 aa).

2 consecutive transmembrane segments (helical) span residues 24 to 44 (VAEFISMLIFVFAGSGSGMAF) and 57 to 77 (GLIAASLAHALALFVAVAVGA). The short motif at 85 to 87 (NPA) is the NPA 1 element. Helical transmembrane passes span 115–137 (VVACLLLKIATGGAAVGAFSLSA), 144–164 (AVVFEIVMTFGLVYTVYATAV), and 173–193 (VIAPIAIGFIVGANILAGGAF). Residues 199–201 (NPA) carry the NPA 2 motif. A helical membrane pass occupies residues 220 to 240 (WLGPFVGAAIAALIYDIIFIG).

It belongs to the MIP/aquaporin (TC 1.A.8) family. TIP (TC 1.A.8.10) subfamily. In terms of tissue distribution, expressed in leaves.

It localises to the vacuole membrane. Aquaporins facilitate the transport of water and small neutral solutes across cell membranes. May be involved in transport from the vacuolar compartment to the cytoplasm. The chain is Probable aquaporin TIP1-2 (TIP1-2) from Oryza sativa subsp. japonica (Rice).